Here is a 310-residue protein sequence, read N- to C-terminus: Vomeronasal type-1 receptor 97 (310 aa).

The Extracellular segment spans residues 1-19 (MNKDNILHTDTNIKITLFS). Residues 20–40 (EVSIGISANSALFFSHLFMLF) traverse the membrane as a helical segment. Topologically, residues 41–49 (EKNRSKPID) are cytoplasmic. Residues 50–70 (LYIAFLSLTQLMLLITIGLIA) traverse the membrane as a helical segment. Residues 71–93 (ADMFMSRGRWDSTTCQSLIYLHR) are Extracellular-facing. A disulfide bridge links Cys85 with Cys172. The helical transmembrane segment at 94-114 (LLRGFTLCATCLLNVLWTITL) threads the bilayer. Over 115 to 131 (SPRSSCLTTFKHKSPHH) the chain is Cytoplasmic. A helical transmembrane segment spans residues 132–152 (ISGAFLFFCVLYISFGSHLFL). Residues 153 to 190 (STIATPNLTSDNFMYVTQSCSFLPMSYSRTSMFSTPMA) are Extracellular-facing. Asn159 carries an N-linked (GlcNAc...) asparagine glycan. A helical membrane pass occupies residues 191–211 (IREALLIGLIGLSSGYMVAFL). Residues 212–238 (WRHKNQARHLHSTSLSSKVSPEQRATR) lie on the Cytoplasmic side of the membrane. Residues 239-259 (TIMILMSFFVVLYILENVVFY) traverse the membrane as a helical segment. Residues 260 to 269 (SRMTFKDGSM) lie on the Extracellular side of the membrane. A helical transmembrane segment spans residues 270-290 (FYCVQIIVSHSYATISPFVFI). The Cytoplasmic portion of the chain corresponds to 291–310 (CTEKRIIKLWGSMSSRIVSI).

This sequence belongs to the G-protein coupled receptor 1 family. As to expression, expressed in 1-4% of neurons of the vomeronasal organ. Only one pheromone receptor gene may be expressed in a particular neuron. Not expressed in the main olfactory epithelium.

The protein resides in the cell membrane. Its function is as follows. Putative pheromone receptor implicated in the regulation of social as well as reproductive behavior. This chain is Vomeronasal type-1 receptor 97 (Vom1r97), found in Rattus norvegicus (Rat).